The following is a 463-amino-acid chain: MRSRSRSRSRQRERRRSDSRARSRSERRTYQKPQHRRSVSRERKRERDRELHRERTSNRSSRRSREKDAVPRRRRTRSSPSRSSSSSSSDRSSSSRSPSRSRKSRPKSVERWPNDRYHENNDRRQNPFRGRAPEGSFINDPAEPSFRSQHRGRGSSNHQFKGDSKAVNARRNQRVLIGEEGVPEVWGKSPSRPETDDVELVKGSYIGPKKKKKKGKRKHKKSEKKSKKKSKKSKKKKSKQESSSSSSSSSSEDSSDESSSSSSSSSSDSEDESEEEDVWLEKTADGIKKPKKKKSSTSKKDKKSKKKKKKRKSEAEKSKKSSSSSASKSKNKESASHNDEDVGPSLRPGGSLNQKDFGKALLPGEGAAMAAYIAEGKRIPRRGEIGLTSDEIANFESVGYVMSGSRHRRMEAVRIRKENQLYSADEKRALAMFSKEERQKRENKILSQFKDMIHSKLQAKDKK.

Residues Met1–Arg14 are compositionally biased toward basic residues. The tract at residues Met1–Gly358 is disordered. Composition is skewed to basic and acidic residues over residues Arg15–Thr29 and Val39–Pro71. Residues Ser78–Pro98 show a composition bias toward low complexity. A compositionally biased stretch (basic and acidic residues) spans Lys107–Gln125. Ser136, Ser189, and Ser191 each carry phosphoserine. A Phosphothreonine modification is found at Thr195. Positions Pro208–Ser238 are enriched in basic residues. Residues Glu241 to Ser267 are compositionally biased toward low complexity. Residues Asp268 to Val278 show a composition bias toward acidic residues. Basic and acidic residues predominate over residues Trp279–Lys288. Positions Lys289–Lys312 are enriched in basic residues. Basic and acidic residues predominate over residues Lys330–Glu340.

Belongs to the NKAP family.

Its subcellular location is the nucleus. Its function is as follows. Tumor suppressor involved in maintaining genome integrity. Influences gene expression and mRNA splicing. This is NF-kappa-B-activating protein from Drosophila melanogaster (Fruit fly).